The sequence spans 194 residues: Mitochondrial inner membrane protease ATP23 (194 aa).

A disordered region spans residues 1 to 20; it reads MEDAAAPNSGSEFNPGARRG. His-96 is a Zn(2+) binding site. Glu-97 is a catalytic residue. Position 100 (His-100) interacts with Zn(2+).

The protein belongs to the peptidase M76 family.

Its subcellular location is the mitochondrion inner membrane. Functionally, has a dual role in the assembly of mitochondrial ATPase. Acts as a protease that removes the N-terminal 10 residues of mitochondrial ATPase CF(0) subunit 6 (ATP6) at the intermembrane space side. Also involved in the correct assembly of the membrane-embedded ATPase CF(0) particle, probably mediating association of ATP6 with the subunit 9 ring. In Arabidopsis thaliana (Mouse-ear cress), this protein is Mitochondrial inner membrane protease ATP23.